The primary structure comprises 461 residues: Cysteine--tRNA ligase (461 aa).

Position 28 (Cys-28) interacts with Zn(2+). The short motif at 30 to 40 (ITVYDLCHIGH) is the 'HIGH' region element. Residues Cys-209, His-234, and Glu-238 each coordinate Zn(2+). A 'KMSKS' region motif is present at residues 266 to 270 (KMSKS). An ATP-binding site is contributed by Lys-269.

It belongs to the class-I aminoacyl-tRNA synthetase family. As to quaternary structure, monomer. The cofactor is Zn(2+).

The protein resides in the cytoplasm. The catalysed reaction is tRNA(Cys) + L-cysteine + ATP = L-cysteinyl-tRNA(Cys) + AMP + diphosphate. This chain is Cysteine--tRNA ligase, found in Shigella sonnei (strain Ss046).